A 790-amino-acid chain; its full sequence is Nuclear cap-binding protein subunit 1 (790 aa).

A disordered region spans residues 1 to 26 (MSRRRHSYENDGGQPHKRRKTSDANE). Positions 3–20 (RRRHSYENDGGQPHKRRK) match the Nuclear localization signal motif. S7 is subject to Phosphoserine. The residue at position 21 (T21) is a Phosphothreonine. 2 positions are modified to phosphoserine: S22 and S201. In terms of domain architecture, MIF4G spans 28–240 (EDHLESLICK…CLWAQIQKLK (213 aa)). K204 is modified (N6-acetyllysine). Residues 643–713 (STIRKMNKHV…SEQKNLFLVI (71 aa)) adopt a coiled-coil conformation. A Glycyl lysine isopeptide (Lys-Gly) (interchain with G-Cter in SUMO2) cross-link involves residue K684. Position 698 is an N6-acetyllysine (K698).

This sequence belongs to the NCBP1 family. In terms of assembly, component of the nuclear cap-binding complex (CBC), a heterodimer composed of NCBP1/CBP80 and NCBP2/CBP20 that interacts with m7GpppG-capped RNA. Found in a U snRNA export complex containing PHAX/RNUXA, NCBP1/CBP80, NCBP2/CBP20, RAN, XPO1 and m7G-capped RNA. Identified in a IGF2BP1-dependent mRNP granule complex containing untranslated mRNAs. Interacts with PHAX/RNUXA, SRRT/ARS2, EIF4G2, IGF2BP1, HNRNPF, HNRNPH1, KIAA0427/CTIF, PARN, DROSHA, UPF1 and ALYREF/THOC4. May interact with EIF4G1; the interaction is however controversial since it is reported by, and, but is not observed by. The large PER complex involved in the repression of transcriptional termination is composed of at least PER2, CDK9, DDX5, DHX9, NCBP1/CBP80 and POLR2A. Component of an alternative nuclear cap-binding complex (CBC) composed of NCBP1/CBP80 and NCBP3. Interacts with METTL3. Interacts with ZFC3H1 in a RNase-insensitive manner. Interacts with MTREX. Interacts with TASOR. Interacts with DHX34; the interaction is RNA-dependent. Interacts with KPNA3. In terms of processing, dephosphorylated at Thr-21 by the PNUTS-PP1 complex during RNA polymerase II transcription pause-release.

It is found in the nucleus. It localises to the cytoplasm. Component of the cap-binding complex (CBC), which binds cotranscriptionally to the 5'-cap of pre-mRNAs and is involved in various processes such as pre-mRNA splicing, translation regulation, nonsense-mediated mRNA decay, RNA-mediated gene silencing (RNAi) by microRNAs (miRNAs) and mRNA export. The CBC complex is involved in mRNA export from the nucleus via its interaction with ALYREF/THOC4/ALY, leading to the recruitment of the mRNA export machinery to the 5'-end of mRNA and to mRNA export in a 5' to 3' direction through the nuclear pore. The CBC complex is also involved in mediating U snRNA and intronless mRNAs export from the nucleus. The CBC complex is essential for a pioneer round of mRNA translation, before steady state translation when the CBC complex is replaced by cytoplasmic cap-binding protein eIF4E. The pioneer round of mRNA translation mediated by the CBC complex plays a central role in nonsense-mediated mRNA decay (NMD), NMD only taking place in mRNAs bound to the CBC complex, but not on eIF4E-bound mRNAs. The CBC complex enhances NMD in mRNAs containing at least one exon-junction complex (EJC) via its interaction with UPF1, promoting the interaction between UPF1 and UPF2. The CBC complex is also involved in 'failsafe' NMD, which is independent of the EJC complex, while it does not participate in Staufen-mediated mRNA decay (SMD). During cell proliferation, the CBC complex is also involved in microRNAs (miRNAs) biogenesis via its interaction with SRRT/ARS2 and is required for miRNA-mediated RNA interference. The CBC complex also acts as a negative regulator of PARN, thereby acting as an inhibitor of mRNA deadenylation. In the CBC complex, NCBP1/CBP80 does not bind directly capped RNAs (m7GpppG-capped RNA) but is required to stabilize the movement of the N-terminal loop of NCBP2/CBP20 and lock the CBC into a high affinity cap-binding state with the cap structure. Associates with NCBP3 to form an alternative cap-binding complex (CBC) which plays a key role in mRNA export and is particularly important in cellular stress situations such as virus infections. The conventional CBC with NCBP2 binds both small nuclear RNA (snRNA) and messenger (mRNA) and is involved in their export from the nucleus whereas the alternative CBC with NCBP3 does not bind snRNA and associates only with mRNA thereby playing a role only in mRNA export. NCBP1/CBP80 is required for cell growth and viability. This chain is Nuclear cap-binding protein subunit 1 (Ncbp1), found in Rattus norvegicus (Rat).